A 414-amino-acid chain; its full sequence is Serine--tRNA ligase (414 aa).

T230 to E232 is a binding site for L-serine. R261 to E263 serves as a coordination point for ATP. E284 provides a ligand contact to L-serine. Residue E348–S351 coordinates ATP. S382 contributes to the L-serine binding site.

The protein belongs to the class-II aminoacyl-tRNA synthetase family. Type-1 seryl-tRNA synthetase subfamily. In terms of assembly, homodimer. The tRNA molecule binds across the dimer.

Its subcellular location is the cytoplasm. The catalysed reaction is tRNA(Ser) + L-serine + ATP = L-seryl-tRNA(Ser) + AMP + diphosphate + H(+). It catalyses the reaction tRNA(Sec) + L-serine + ATP = L-seryl-tRNA(Sec) + AMP + diphosphate + H(+). It participates in aminoacyl-tRNA biosynthesis; selenocysteinyl-tRNA(Sec) biosynthesis; L-seryl-tRNA(Sec) from L-serine and tRNA(Sec): step 1/1. Its function is as follows. Catalyzes the attachment of serine to tRNA(Ser). Is also able to aminoacylate tRNA(Sec) with serine, to form the misacylated tRNA L-seryl-tRNA(Sec), which will be further converted into selenocysteinyl-tRNA(Sec). This Campylobacter concisus (strain 13826) protein is Serine--tRNA ligase.